The following is a 550-amino-acid chain: Leiomodin-2 (550 aa).

Positions 1–47 are interaction with tropomyosin alpha; that stretch reads MSTFGYRRGLSKYESIDEDELLASLSPEELKELERELEDIEPDRNLP. Interaction with actin stretches follow at residues 1-165, 166-500, and 524-543; these read MSTF…TDNS, KPKT…KEIK, and VHEN…LRRV. S11, S15, and S24 each carry phosphoserine. Residues 84 to 94 show a composition bias toward basic and acidic residues; that stretch reads ERLGECGKVAE. Disordered regions lie at residues 84–202 and 359–527; these read ERLG…PCGN and MDKQ…VHEN. Residues 91–147 are a coiled coil; it reads KVAEEDKEESEEELIFTESNSEVSEEVCTEDEEESQEEEEDSEEEEDSEEEEETTEA. Acidic residues-rich tracts occupy residues 95–105 and 113–145; these read EDKEESEEELI and VSEE…EETT. Composition is skewed to polar residues over residues 151–164 and 170–193; these read INGT…NTDN and FKSQ…NSES. A compositionally biased stretch (basic and acidic residues) spans 359–377; sequence MDKQRQKRMQEQKQQEGHD. Polar residues predominate over residues 391-402; sequence TPGSSPYASPRQ. At S407 the chain carries Phosphoserine. The span at 421–452 shows a compositional bias: pro residues; sequence PPSPVAPPPPPPPPPLPPHMLPPPPPPPAPPL. The span at 468 to 479 shows a compositional bias: polar residues; that stretch reads QQESAQRALQNG. The segment covering 480-490 has biased composition (basic residues); the sequence is QRKKKGKKVKK. The segment covering 497–515 has biased composition (basic and acidic residues); the sequence is KEIKNSLRSVQEKKMEDSS. The WH2 domain maps to 524-543; that stretch reads VHENLMEAIRGSSIRQLRRV.

This sequence belongs to the tropomodulin family. As to quaternary structure, can bind at least three actin monomers and thereby provides a nucleus for actin filament formation. Interacts (via N-terminus) with tropomyosin alpha (TPM1) (via N-terminus). May also interact with TPM2 (via N-terminus). Interacts with FLII. Detected in neonate heart (at protein level). Detected in embryonic heart and in pharyngeal arches. Detected in adult heart.

Its subcellular location is the cytoplasm. The protein resides in the myofibril. It localises to the sarcomere. The protein localises to the m line. It is found in the cytoskeleton. Its function is as follows. Mediates nucleation of actin filaments and thereby promotes actin polymerization. Plays a role in the regulation of actin filament length. Required for normal sarcomere organization in the heart, and for normal heart function. This chain is Leiomodin-2 (Lmod2), found in Mus musculus (Mouse).